A 781-amino-acid polypeptide reads, in one-letter code: Sialidase (781 aa).

An N-terminal signal peptide occupies residues 1 to 24 (MRFKNVKKTALMLAMFGMATSSNA). Arg224 lines the substrate pocket. Residue Asp250 is the Proton acceptor of the active site. BNR repeat units lie at residues 263–274 (RTSRDGGITWDT) and 585–596 (IYSDDGGSNWQT). Glu619 is a catalytic residue. Residue Arg635 participates in substrate binding. The BNR 3 repeat unit spans residues 653 to 664 (FLSKDGGITWSL). Residue Arg712 participates in substrate binding. The stretch at 718-729 (WFSFDEGVTWKG) is one BNR 4 repeat. Tyr740 serves as the catalytic Nucleophile.

It belongs to the glycosyl hydrolase 33 family. In terms of assembly, monomer. It depends on Ca(2+) as a cofactor.

It is found in the secreted. The enzyme catalyses Hydrolysis of alpha-(2-&gt;3)-, alpha-(2-&gt;6)-, alpha-(2-&gt;8)- glycosidic linkages of terminal sialic acid residues in oligosaccharides, glycoproteins, glycolipids, colominic acid and synthetic substrates.. Functionally, cleaves the terminal sialic acid (N-acetyl neuraminic acid) from carbohydrate chains in glycoproteins providing free sialic acid which can be used as carbon and energy sources. Sialidases have been suggested to be pathogenic factors in microbial infections. Facilitates cholera toxin binding to host intestinal epithelial cells by converting cell surface polysialogangliosides to GM1 monogangliosides. This is Sialidase (nanH) from Vibrio cholerae serotype O1 (strain ATCC 39541 / Classical Ogawa 395 / O395).